The following is a 317-amino-acid chain: Transaldolase (317 aa).

Lysine 126 serves as the catalytic Schiff-base intermediate with substrate.

The protein belongs to the transaldolase family. Type 1 subfamily. In terms of assembly, homodimer.

Its subcellular location is the cytoplasm. The catalysed reaction is D-sedoheptulose 7-phosphate + D-glyceraldehyde 3-phosphate = D-erythrose 4-phosphate + beta-D-fructose 6-phosphate. It functions in the pathway carbohydrate degradation; pentose phosphate pathway; D-glyceraldehyde 3-phosphate and beta-D-fructose 6-phosphate from D-ribose 5-phosphate and D-xylulose 5-phosphate (non-oxidative stage): step 2/3. Functionally, transaldolase is important for the balance of metabolites in the pentose-phosphate pathway. The sequence is that of Transaldolase from Burkholderia ambifaria (strain MC40-6).